The chain runs to 377 residues: tRNA-specific 2-thiouridylase MnmA (377 aa).

Residues 12-19 and M38 contribute to the ATP site; that span reads GMSGGVDS. The segment at 98–100 is interaction with target base in tRNA; that stretch reads NPD. Catalysis depends on C103, which acts as the Nucleophile. Cysteines 103 and 200 form a disulfide. G127 contacts ATP. An interaction with tRNA region spans residues 150–152; the sequence is KDQ. The Cysteine persulfide intermediate role is filled by C200. Positions 314–315 are interaction with tRNA; that stretch reads RY.

This sequence belongs to the MnmA/TRMU family.

The protein localises to the cytoplasm. The enzyme catalyses S-sulfanyl-L-cysteinyl-[protein] + uridine(34) in tRNA + AH2 + ATP = 2-thiouridine(34) in tRNA + L-cysteinyl-[protein] + A + AMP + diphosphate + H(+). Its function is as follows. Catalyzes the 2-thiolation of uridine at the wobble position (U34) of tRNA, leading to the formation of s(2)U34. This chain is tRNA-specific 2-thiouridylase MnmA, found in Limosilactobacillus fermentum (strain NBRC 3956 / LMG 18251) (Lactobacillus fermentum).